Consider the following 237-residue polypeptide: Ribonuclease 3 (237 aa).

The RNase III domain maps to 4-133; the sequence is LTELENSLGV…VLAAIYIDKG (130 aa). Glu-46 is a binding site for Mg(2+). Residues Asp-50 and Glu-122 contribute to the active site. Mg(2+) is bound at residue Glu-122. A DRBM domain is found at 160–229; the sequence is DYKSRLQELI…AKVALQQFEN (70 aa).

This sequence belongs to the ribonuclease III family. As to quaternary structure, homodimer. The cofactor is Mg(2+).

It is found in the cytoplasm. The catalysed reaction is Endonucleolytic cleavage to 5'-phosphomonoester.. Its function is as follows. Digests double-stranded RNA. Involved in the processing of primary rRNA transcript to yield the immediate precursors to the large and small rRNAs (23S and 16S). Processes some mRNAs, and tRNAs when they are encoded in the rRNA operon. Processes pre-crRNA and tracrRNA of type II CRISPR loci if present in the organism. The chain is Ribonuclease 3 from Dehalococcoides mccartyi (strain CBDB1).